A 37-amino-acid polypeptide reads, in one-letter code: Esculentin-2SE (37 aa).

An intrachain disulfide couples Cys31 to Cys37.

As to expression, expressed by the skin glands.

It is found in the secreted. Functionally, mast cell degranulating peptide. Causes histamine release from rat peritoneal mast cells in vitro. Has antibacterial activity against the Gram-negative bacterium E.coli K12 and Gram-positive bacterium M.luteus NCT C2665. The chain is Esculentin-2SE from Lithobates sevosus (Dusky gopher frog).